We begin with the raw amino-acid sequence, 600 residues long: Pyranose dehydrogenase 2 (600 aa).

Residues 1–25 form the signal peptide; sequence MLSRVAKLNSRLVSLALLGSQIAFG. 2 N-linked (GlcNAc...) asparagine glycosylation sites follow: N99 and N114. H127 is subject to Tele-8alpha-FAD histidine. Residues N199, N275, and N342 are each glycosylated (N-linked (GlcNAc...) asparagine). Residue H535 is the Proton acceptor of the active site. H579 is an active-site residue.

It belongs to the GMC oxidoreductase family. Monomer. The cofactor is FAD. In terms of processing, N-glycosylated.

The protein resides in the secreted. The catalysed reaction is pyranose + acceptor = pyranos-2-ulose + reduced acceptor.. The enzyme catalyses pyranose + acceptor = pyranos-3-ulose + reduced acceptor.. It carries out the reaction pyranose + acceptor = pyranos-2,3-diulose + reduced acceptor.. It catalyses the reaction a pyranoside + acceptor = a pyranosid-3-ulose + reduced acceptor.. The catalysed reaction is a pyranoside + acceptor = a pyranosid-3,4-diulose + reduced acceptor.. Functionally, catalyzes the single-oxidation or sequential double oxidation reaction of carbohydrates primarily at carbon-2 and/or carbon-3 with the concomitant reduction of the flavin. The enzyme exhibits a broad sugar substrate specificity, oxidizing different aldopyranoses to the corresponding C-1, C-2, C-3 or C-1,2, C-2,3 and C-3,4 (di)dehydro sugars with substrate-specific regioselectivity. Accepts only a narrow range of electron acceptors such as substituted benzoquinones and complexed metal ions and reacts extremely slowly with O(2) as acceptor. May play a role in the natural recycling of plant matter by oxidizing all major monosaccharides in lignocellulose and by reducing quinone compounds or reactive radical species generated during lignin depolymerization. The chain is Pyranose dehydrogenase 2 from Leucoagaricus meleagris (Western flat-topped agaric).